Consider the following 122-residue polypeptide: S-adenosylmethionine decarboxylase proenzyme (122 aa).

Catalysis depends on S63, which acts as the Schiff-base intermediate with substrate; via pyruvic acid. S63 carries the post-translational modification Pyruvic acid (Ser); by autocatalysis. The Proton acceptor; for processing activity role is filled by H68. C83 functions as the Proton donor; for catalytic activity in the catalytic mechanism.

This sequence belongs to the prokaryotic AdoMetDC family. Type 1 subfamily. Heterotetramer of two alpha and two beta chains arranged as a dimer of alpha/beta heterodimers. Requires pyruvate as cofactor. Post-translationally, is synthesized initially as an inactive proenzyme. Formation of the active enzyme involves a self-maturation process in which the active site pyruvoyl group is generated from an internal serine residue via an autocatalytic post-translational modification. Two non-identical subunits are generated from the proenzyme in this reaction, and the pyruvate is formed at the N-terminus of the alpha chain, which is derived from the carboxyl end of the proenzyme. The post-translation cleavage follows an unusual pathway, termed non-hydrolytic serinolysis, in which the side chain hydroxyl group of the serine supplies its oxygen atom to form the C-terminus of the beta chain, while the remainder of the serine residue undergoes an oxidative deamination to produce ammonia and the pyruvoyl group blocking the N-terminus of the alpha chain.

The catalysed reaction is S-adenosyl-L-methionine + H(+) = S-adenosyl 3-(methylsulfanyl)propylamine + CO2. It participates in amine and polyamine biosynthesis; S-adenosylmethioninamine biosynthesis; S-adenosylmethioninamine from S-adenosyl-L-methionine: step 1/1. Its function is as follows. Catalyzes the decarboxylation of S-adenosylmethionine to S-adenosylmethioninamine (dcAdoMet), the propylamine donor required for the synthesis of the polyamines spermine and spermidine from the diamine putrescine. The chain is S-adenosylmethionine decarboxylase proenzyme from Methanococcus maripaludis (strain C5 / ATCC BAA-1333).